The primary structure comprises 350 residues: Small ribosomal subunit biogenesis GTPase RsgA (350 aa).

A compositionally biased stretch (polar residues) spans 1–17 (MSKNKLSKGQQRRVNAN). The tract at residues 1–33 (MSKNKLSKGQQRRVNANHQRRLKTSKEKPDYDD) is disordered. Residues 104–273 (TSVLTRPDFY…VIDSPGVREF (170 aa)) form the CP-type G domain. GTP-binding positions include 160–163 (NKID) and 214–222 (GQSGVGKSS). Positions 297, 302, 304, and 310 each coordinate Zn(2+).

This sequence belongs to the TRAFAC class YlqF/YawG GTPase family. RsgA subfamily. Monomer. Associates with 30S ribosomal subunit, binds 16S rRNA. Zn(2+) serves as cofactor.

The protein localises to the cytoplasm. Its function is as follows. One of several proteins that assist in the late maturation steps of the functional core of the 30S ribosomal subunit. Helps release RbfA from mature subunits. May play a role in the assembly of ribosomal proteins into the subunit. Circularly permuted GTPase that catalyzes slow GTP hydrolysis, GTPase activity is stimulated by the 30S ribosomal subunit. The chain is Small ribosomal subunit biogenesis GTPase RsgA from Shigella flexneri.